Here is a 415-residue protein sequence, read N- to C-terminus: tRNA(Met) cytidine acetate ligase (415 aa).

Residues 7 to 20, G102, N165, and 190 to 191 contribute to the ATP site; these read IVEYNPFHNGHLYH and RI.

It belongs to the TmcAL family.

The protein resides in the cytoplasm. The enzyme catalyses cytidine(34) in elongator tRNA(Met) + acetate + ATP = N(4)-acetylcytidine(34) in elongator tRNA(Met) + AMP + diphosphate. Catalyzes the formation of N(4)-acetylcytidine (ac(4)C) at the wobble position of elongator tRNA(Met), using acetate and ATP as substrates. First activates an acetate ion to form acetyladenylate (Ac-AMP) and then transfers the acetyl group to tRNA to form ac(4)C34. The chain is tRNA(Met) cytidine acetate ligase from Acetivibrio thermocellus (strain ATCC 27405 / DSM 1237 / JCM 9322 / NBRC 103400 / NCIMB 10682 / NRRL B-4536 / VPI 7372) (Clostridium thermocellum).